A 201-amino-acid chain; its full sequence is Small ribosomal subunit protein uS4 (201 aa).

A disordered region spans residues leucine 26 to glycine 48. The 64-residue stretch at glycine 92 to leucine 155 folds into the S4 RNA-binding domain.

This sequence belongs to the universal ribosomal protein uS4 family. Part of the 30S ribosomal subunit. Contacts protein S5. The interaction surface between S4 and S5 is involved in control of translational fidelity.

Its function is as follows. One of the primary rRNA binding proteins, it binds directly to 16S rRNA where it nucleates assembly of the body of the 30S subunit. Functionally, with S5 and S12 plays an important role in translational accuracy. This is Small ribosomal subunit protein uS4 from Bacteroides thetaiotaomicron (strain ATCC 29148 / DSM 2079 / JCM 5827 / CCUG 10774 / NCTC 10582 / VPI-5482 / E50).